The following is a 617-amino-acid chain: Leucine aminopeptidase 2 (617 aa).

A peptide contacts are provided by residues 139–141 (QCQ) and 271–276 (PYGGME). His300 lines the Zn(2+) pocket. Glu301 acts as the Proton acceptor in catalysis. His304 and Glu323 together coordinate Zn(2+). The active-site Proton donor is the Tyr388.

This sequence belongs to the peptidase M1 family. Requires Zn(2+) as cofactor.

It localises to the cytoplasm. The protein resides in the nucleus. The enzyme catalyses an epoxide + H2O = an ethanediol. In terms of biological role, aminopeptidase that preferentially cleaves di- and tripeptides. Also has low epoxide hydrolase activity (in vitro). Can hydrolyze the epoxide leukotriene LTA(4) but it forms preferentially 5,6-dihydroxy-7,9,11,14-eicosatetraenoic acid rather than the cytokine leukotriene B(4) as the product compared to the homologous mammalian enzyme (in vitro). This Neosartorya fischeri (strain ATCC 1020 / DSM 3700 / CBS 544.65 / FGSC A1164 / JCM 1740 / NRRL 181 / WB 181) (Aspergillus fischerianus) protein is Leucine aminopeptidase 2.